Consider the following 601-residue polypeptide: Somatic embryogenesis receptor kinase 5 (601 aa).

Residues 1-24 (MEHGSSRGFIWLILFLDFVSRVTG) form the signal peptide. Residues 25–215 (KTQVDALIAL…SPSPSPSGTS (191 aa)) are Extracellular-facing. N52, N81, N105, N129, N151, and N184 each carry an N-linked (GlcNAc...) asparagine glycan. LRR repeat units follow at residues 71–94 (SVTR…AQLP), 95–118 (NLQY…GDLM), 119–141 (ELVS…LGKL), 143–165 (KLRF…LTAL), and 166–188 (PLDV…GSFS). Residues 216–236 (AAIVVGVAAGAALLFALAWWL) traverse the membrane as a helical segment. Residues 237–601 (RRKLQGHFLD…IENDYPSGPR (365 aa)) are Cytoplasmic-facing. T272 carries the post-translational modification Phosphothreonine. Positions 275–572 (FSKRNVLGKG…KEEMPIHDFN (298 aa)) constitute a Protein kinase domain. 281 to 289 (LGKGRFGIL) contacts ATP. T298 carries the phosphothreonine modification. Residue K303 participates in ATP binding. Phosphoserine occurs at positions 356 and 359. The Proton acceptor role is filled by D402. Phosphothreonine is present on residues T435, T436, and T441. Residue Y449 is modified to Phosphotyrosine. Position 451 is a phosphoserine (S451). A Phosphothreonine modification is found at T452. S456 and S506 each carry phosphoserine. Residue T532 is modified to Phosphothreonine.

The protein belongs to the protein kinase superfamily. Ser/Thr protein kinase family. As to quaternary structure, interacts with TMK4/BARK1. In terms of processing, autophosphorylated.

The protein resides in the cell membrane. The catalysed reaction is L-seryl-[protein] + ATP = O-phospho-L-seryl-[protein] + ADP + H(+). It carries out the reaction L-threonyl-[protein] + ATP = O-phospho-L-threonyl-[protein] + ADP + H(+). Functionally, serine/threonine-kinase of unknown function. The chain is Somatic embryogenesis receptor kinase 5 (SERK5) from Arabidopsis thaliana (Mouse-ear cress).